The sequence spans 497 residues: Protein nucleotidyltransferase YdiU (497 aa).

Gly-88, Gly-90, Arg-91, Lys-110, Asp-122, Gly-123, Arg-173, and Arg-180 together coordinate ATP. Catalysis depends on Asp-249, which acts as the Proton acceptor. Residues Asn-250 and Asp-259 each coordinate Mg(2+). Asp-259 provides a ligand contact to ATP. The segment at 477-497 (FARYAEPPEGGGRGYRTFCGT) is disordered.

Belongs to the SELO family. Mg(2+) is required as a cofactor. It depends on Mn(2+) as a cofactor.

It catalyses the reaction L-seryl-[protein] + ATP = 3-O-(5'-adenylyl)-L-seryl-[protein] + diphosphate. It carries out the reaction L-threonyl-[protein] + ATP = 3-O-(5'-adenylyl)-L-threonyl-[protein] + diphosphate. The catalysed reaction is L-tyrosyl-[protein] + ATP = O-(5'-adenylyl)-L-tyrosyl-[protein] + diphosphate. The enzyme catalyses L-histidyl-[protein] + UTP = N(tele)-(5'-uridylyl)-L-histidyl-[protein] + diphosphate. It catalyses the reaction L-seryl-[protein] + UTP = O-(5'-uridylyl)-L-seryl-[protein] + diphosphate. It carries out the reaction L-tyrosyl-[protein] + UTP = O-(5'-uridylyl)-L-tyrosyl-[protein] + diphosphate. Nucleotidyltransferase involved in the post-translational modification of proteins. It can catalyze the addition of adenosine monophosphate (AMP) or uridine monophosphate (UMP) to a protein, resulting in modifications known as AMPylation and UMPylation. The polypeptide is Protein nucleotidyltransferase YdiU (Methylorubrum extorquens (strain PA1) (Methylobacterium extorquens)).